The primary structure comprises 559 residues: Sesquiterpene synthase TPS3 (559 aa).

Residues Arg275, Asp312, Asp316, Arg453, and Asp456 each coordinate (2E,6E)-farnesyl diphosphate. 2 residues coordinate Mg(2+): Asp312 and Asp316. A DDXXD motif motif is present at residues 312-316 (DDTYD). Residues Asp456, Thr460, and Glu464 each coordinate Mg(2+).

Belongs to the terpene synthase family. Tpsa subfamily. Monomer. The cofactor is Mg(2+). In terms of tissue distribution, highly expressed in glandular trichomes. Expressed in roots and leaves.

The protein localises to the cytoplasm. The catalysed reaction is (2E,6E)-farnesyl diphosphate = (+)-(R)-germacrene A + diphosphate. It participates in secondary metabolite biosynthesis; terpenoid biosynthesis. In terms of biological role, sesquiterpene synthase involved in the biosynthesis of volatile compounds. Mediates the conversion of (2E,6E)-farnesyl diphosphate (FPP) into (+)-(R)-germacrene A. This is Sesquiterpene synthase TPS3 from Xanthium strumarium (Rough cocklebur).